The following is a 341-amino-acid chain: Ketol-acid reductoisomerase (NADP(+)) (341 aa).

The region spanning Leu3–Thr184 is the KARI N-terminal Rossmann domain. Residues Phe26–Gln29, Ser54, and Asp84–Gln87 contribute to the NADP(+) site. Residue His109 is part of the active site. NADP(+) is bound at residue Gly135. Residues Thr185–Ile330 enclose the KARI C-terminal knotted domain. 4 residues coordinate Mg(2+): Asp193, Glu197, Glu229, and Glu233. Residue Ser254 participates in substrate binding.

The protein belongs to the ketol-acid reductoisomerase family. Mg(2+) serves as cofactor.

It catalyses the reaction (2R)-2,3-dihydroxy-3-methylbutanoate + NADP(+) = (2S)-2-acetolactate + NADPH + H(+). The enzyme catalyses (2R,3R)-2,3-dihydroxy-3-methylpentanoate + NADP(+) = (S)-2-ethyl-2-hydroxy-3-oxobutanoate + NADPH + H(+). It functions in the pathway amino-acid biosynthesis; L-isoleucine biosynthesis; L-isoleucine from 2-oxobutanoate: step 2/4. The protein operates within amino-acid biosynthesis; L-valine biosynthesis; L-valine from pyruvate: step 2/4. Functionally, involved in the biosynthesis of branched-chain amino acids (BCAA). Catalyzes an alkyl-migration followed by a ketol-acid reduction of (S)-2-acetolactate (S2AL) to yield (R)-2,3-dihydroxy-isovalerate. In the isomerase reaction, S2AL is rearranged via a Mg-dependent methyl migration to produce 3-hydroxy-3-methyl-2-ketobutyrate (HMKB). In the reductase reaction, this 2-ketoacid undergoes a metal-dependent reduction by NADPH to yield (R)-2,3-dihydroxy-isovalerate. The chain is Ketol-acid reductoisomerase (NADP(+)) from Helicobacter hepaticus (strain ATCC 51449 / 3B1).